Reading from the N-terminus, the 539-residue chain is MDSQRTLLVLLLALVSFLLFQQWQVAKNPAPQAVEQAQTSSTLPAPSFADELDPAPAQQASAKLITVTTDVLTLSIDTVGGDVVAADLNQYSAELNSANAFELLRDTQGHQFIAQSGLVGPQGIDLSSNNRPSYQVSADSFTLADDQNELRIPMTYQANGLEYTKTFILKRGSYAIDVEFDVINKSGNNATLGMYAHLRQNLMDAGGSITMPTYRGGAYSTEDTRYKKYSFEDMQDRNLSLTLTNGQGWAAMIQHYFAAAWIPRNEPGANLYTRVIGNMGDIGVRMPNKTVADGDSAHFTATLWAGPKLQDQMAEVAPNLDLVVDYGWLWFIAKPLHWLLSVIQSFVGNWGVAIICLTFIVRGAMYPLTKAQYTSMAKMRMLQPKLQAMRERIGDDRQRMSQEMMELYKKEKVNPLGGCLPLILQMPIFIALYWALMESVELRHSPFILWIHDLSAQDPYFILPLLMGGSMFLIQKMSPTTVTDPMQQKIMTFMPVMFTFFFLWFPSGLVLYWLVSNIVTLIQQSLIYKALEKKGLHTK.

Helical transmembrane passes span 6-26 (TLLV…WQVA), 341-361 (SVIQ…TFIV), 416-436 (LGGC…YWAL), 454-474 (LSAQ…MFLI), and 495-515 (PVMF…YWLV).

The protein belongs to the OXA1/ALB3/YidC family. Type 1 subfamily. As to quaternary structure, interacts with the Sec translocase complex via SecD. Specifically interacts with transmembrane segments of nascent integral membrane proteins during membrane integration.

Its subcellular location is the cell inner membrane. Required for the insertion and/or proper folding and/or complex formation of integral membrane proteins into the membrane. Involved in integration of membrane proteins that insert both dependently and independently of the Sec translocase complex, as well as at least some lipoproteins. Aids folding of multispanning membrane proteins. The polypeptide is Membrane protein insertase YidC (Vibrio vulnificus (strain YJ016)).